Consider the following 554-residue polypeptide: (E)-nerolidol synthase TPS18VF (554 aa).

The (2E,6E)-farnesyl diphosphate site is built by arginine 276, aspartate 313, aspartate 317, arginine 455, and aspartate 458. The Mg(2+) site is built by aspartate 313 and aspartate 317. The short motif at aspartate 313 to aspartate 317 is the DDXXD motif element. Positions 458, 462, and 466 each coordinate Mg(2+).

Belongs to the terpene synthase family. Tpsb subfamily. Mg(2+) serves as cofactor. Requires Mn(2+) as cofactor. As to expression, highly expressed in glandular trichomes.

The catalysed reaction is (2E,6E)-farnesyl diphosphate + H2O = (6E)-nerolidol + diphosphate. It carries out the reaction (2E)-geranyl diphosphate + H2O = (R)-linalool + diphosphate. The enzyme catalyses (2E)-geranyl diphosphate + H2O = (S)-linalool + diphosphate. The protein operates within secondary metabolite biosynthesis; terpenoid biosynthesis. In terms of biological role, involved in sesquiterpene olefins biosynthesis, constituants of cannabinoids and terpenoids-rich resins. Catalyzes primarily the conversion of (2E)-farnesyl diphosphate to (E)-nerolidol, and the conversion of (2E)-geranyl diphosphate to (+)linalool and (-)linalool. In Cannabis sativa (Hemp), this protein is (E)-nerolidol synthase TPS18VF.